The primary structure comprises 205 residues: Phosphoenolpyruvate guanylyltransferase (205 aa).

The phosphoenolpyruvate site is built by Thr-138, Gly-154, and Ser-157.

Belongs to the CofC family.

The enzyme catalyses phosphoenolpyruvate + GTP + H(+) = enolpyruvoyl-2-diphospho-5'-guanosine + diphosphate. The protein operates within cofactor biosynthesis; coenzyme F420 biosynthesis. Functionally, guanylyltransferase that catalyzes the activation of phosphoenolpyruvate (PEP) as enolpyruvoyl-2-diphospho-5'-guanosine, via the condensation of PEP with GTP. It is involved in the biosynthesis of coenzyme F420, a hydride carrier cofactor. In Chloroflexus aurantiacus (strain ATCC 29364 / DSM 637 / Y-400-fl), this protein is Phosphoenolpyruvate guanylyltransferase.